A 130-amino-acid chain; its full sequence is P antigen family member 5 (130 aa).

Disordered regions lie at residues 1 to 88 (MQAP…TDVE) and 101 to 130 (DAPGDGPDVREGTLPTFDPTKVLEAGEGQL). The span at 14-26 (TREEVRDMSEHVT) shows a compositional bias: basic and acidic residues. Over residues 27–42 (RSQSSERGNDQESSQP) the composition is skewed to polar residues. Residues Thr113 and Thr116 each carry the phosphothreonine modification.

Belongs to the GAGE family.

The chain is P antigen family member 5 (PAGE5) from Homo sapiens (Human).